We begin with the raw amino-acid sequence, 291 residues long: Release factor glutamine methyltransferase (291 aa).

S-adenosyl-L-methionine-binding positions include 127–131 (GTGSG), Asp150, Trp179, and Asn196. 196–199 (NPPY) is a substrate binding site.

It belongs to the protein N5-glutamine methyltransferase family. PrmC subfamily.

The enzyme catalyses L-glutaminyl-[peptide chain release factor] + S-adenosyl-L-methionine = N(5)-methyl-L-glutaminyl-[peptide chain release factor] + S-adenosyl-L-homocysteine + H(+). In terms of biological role, methylates the class 1 translation termination release factors RF1/PrfA and RF2/PrfB on the glutamine residue of the universally conserved GGQ motif. This Thermosynechococcus vestitus (strain NIES-2133 / IAM M-273 / BP-1) protein is Release factor glutamine methyltransferase.